Here is a 492-residue protein sequence, read N- to C-terminus: MSARTPLHAPPSHEGIAHFPREIRRFFTGEPGQTLLVNGAPGTGKTLFTIRGLDVLSREGDVLYVSTRVDQETVYEMYVEGHAALDRTALLDLSQDPFGLPMDVDVPFETLNLESLLSWVDAISAPATKLTLAFDSWRLVYEYLAARHDSPPSIETVTNQLVALARDAGVRLVLVSETATQSPLEYIVDGVVTLHVTDNERGRTRRQLRLEKLRGVRIENRLQPFTLADGQFKAITPVELSTTQSVPDEATWEPLANPTARFSTGIRDLDTILSGGFNRGGVVHLDLGADLSRDAWSVLVLPAIRNFLANEMGVAVVPPKEGSPGLLHNDLSAVLSKAVFDTHCHVFETYAGPTRDHDDAVDPDRLPGHDTTPTEHGTLSYDPYIARAERIREHSDGPLLHVISMDTAYHAFETRLGDFANYVALHNDASVLITKPGTALRTRADRVADMHFRLECAGDAIVLYGETPLTPLLGIGVDQSGTIPEITLTEMV.

39–46 is a binding site for ATP; sequence GAPGTGKT. The span at 355 to 368 shows a compositional bias: basic and acidic residues; sequence RDHDDAVDPDRLPG. The segment at 355–379 is disordered; that stretch reads RDHDDAVDPDRLPGHDTTPTEHGTL.

It belongs to the gas vesicle GvpD family. In terms of assembly, homodimer. Interacts with GvpE, also with GvpE from H.mediterranei.

Its subcellular location is the cytoplasm. In terms of biological role, causes a decrease in the amount of GvpE protein. Gas vesicles are hollow, gas filled proteinaceous nanostructures found in several microbial planktonic microorganisms. They allow positioning of halobacteria at the optimal depth for growth in the poorly aerated, shallow brine pools of their habitat. Its function is as follows. Expression of 2 c-vac DNA fragments containing 2 divergently transcribed regions (gvpE-gvpF-gvpG-gvpH-gvpI-gvpJ-gvpK-gvpL-gvpM and gvpA-gvpC-gvpN-gvpO) allows H.volcanii to produce gas vesicles. The chain is Protein GvpD2 from Halobacterium salinarum (strain ATCC 700922 / JCM 11081 / NRC-1) (Halobacterium halobium).